The sequence spans 285 residues: Octanoyltransferase (285 aa).

The region spanning 50-277 (LRTPDELWIV…NIAQRHAGDI (228 aa)) is the BPL/LPL catalytic domain. Substrate contacts are provided by residues 89-96 (RGGQVTWH), 189-191 (SLG), and 202-204 (GIA). Cysteine 220 serves as the catalytic Acyl-thioester intermediate.

It belongs to the LipB family.

It localises to the cytoplasm. The enzyme catalyses octanoyl-[ACP] + L-lysyl-[protein] = N(6)-octanoyl-L-lysyl-[protein] + holo-[ACP] + H(+). It participates in protein modification; protein lipoylation via endogenous pathway; protein N(6)-(lipoyl)lysine from octanoyl-[acyl-carrier-protein]: step 1/2. Its function is as follows. Catalyzes the transfer of endogenously produced octanoic acid from octanoyl-acyl-carrier-protein onto the lipoyl domains of lipoate-dependent enzymes. Lipoyl-ACP can also act as a substrate although octanoyl-ACP is likely to be the physiological substrate. The sequence is that of Octanoyltransferase from Psychrobacter cryohalolentis (strain ATCC BAA-1226 / DSM 17306 / VKM B-2378 / K5).